The primary structure comprises 860 residues: GAS2-like protein 2 (860 aa).

Basic residues predominate over residues 1 to 12; it reads MSQHVGHGRRPR. The interval 1 to 22 is disordered; that stretch reads MSQHVGHGRRPRTPGPPVRSIR. Positions 32–159 constitute a Calponin-homology (CH) domain; sequence EAMKEDLAEW…CLLELGRRAW (128 aa). In terms of domain architecture, GAR spans 201–273; the sequence is CHFHNLDQMV…HYLDKHDPCR (73 aa). Disordered regions lie at residues 281-459, 473-574, 697-743, 758-781, and 801-860; these read PGSF…SLAS, QLSE…RHTS, TTVR…KGKR, KLRP…IPKP, and ATLG…ESWV. The segment covering 301–316 has biased composition (polar residues); that stretch reads GPSQPQPTMTISRSQS. Basic and acidic residues predominate over residues 347–364; sequence PPVRARTLREDPLPRSQE. Composition is skewed to polar residues over residues 365–393 and 473–485; these read KPTP…STLS and QLSE…SSSP. The segment at 431–860 is interaction with ADORA2A and GNAS; it reads QRLQIPEATS…PLSPEEESWV (430 aa). Basic and acidic residues predominate over residues 530–549; that stretch reads NLDRSTHGHHSVEASGDHQT. Polar residues predominate over residues 724–733; it reads RSCSDPSSDK. The span at 758 to 768 shows a compositional bias: basic residues; sequence KLRPRIRPRRD. A compositionally biased stretch (polar residues) spans 828-840; sequence SNISLESSIQPAE.

This sequence belongs to the GAS2 family. In terms of assembly, interacts with ADORA2A (via its cytoplasmic C-terminal domain). Interacts with GNAS, GNAL, GNAQ, and GNA13. Interacts with MAPRE1. In terms of tissue distribution, expressed in tracheal epithelial cells (at protein level).

It is found in the cytoplasm. The protein localises to the cytoskeleton. It localises to the cell membrane. The protein resides in the stress fiber. Its subcellular location is the cilium basal body. In terms of biological role, involved in the cross-linking of microtubules and microfilaments. Regulates microtubule dynamics and stability by interacting with microtubule plus-end tracking proteins, such as MAPRE1, to regulate microtubule growth along actin stress fibers. Enhances ADORA2-mediated adenylyl cyclase activation by acting as a scaffold to recruit trimeric G-protein complexes to ADORA2A. Regulates ciliary orientation and performance in cells located in the airway. The sequence is that of GAS2-like protein 2 (Gas2l2) from Mus musculus (Mouse).